The following is a 248-amino-acid chain: uncharacterized protein (248 aa).

NADP(+) is bound at residue 8-32; sequence IVTGAAQGIGQAYAQALAREGASVV. Position 143 (Ser-143) interacts with substrate. Tyr-153 serves as the catalytic Proton acceptor.

The protein belongs to the short-chain dehydrogenases/reductases (SDR) family.

This is an uncharacterized protein from Mycobacterium tuberculosis (strain CDC 1551 / Oshkosh).